Here is a 139-residue protein sequence, read N- to C-terminus: D-ribose pyranase (139 aa).

H20 acts as the Proton donor in catalysis. Substrate is bound by residues D28, H106, and 128–130; that span reads YAN.

The protein belongs to the RbsD / FucU family. RbsD subfamily. Homodecamer.

It localises to the cytoplasm. The enzyme catalyses beta-D-ribopyranose = beta-D-ribofuranose. Its pathway is carbohydrate metabolism; D-ribose degradation; D-ribose 5-phosphate from beta-D-ribopyranose: step 1/2. In terms of biological role, catalyzes the interconversion of beta-pyran and beta-furan forms of D-ribose. This chain is D-ribose pyranase, found in Serratia proteamaculans (strain 568).